Here is a 500-residue protein sequence, read N- to C-terminus: NAD(P)H-quinone oxidoreductase chain 4, chloroplastic (500 aa).

A run of 12 helical transmembrane segments spans residues 4–24 (FPWL…ILFI), 37–57 (ICIC…NFQL), 80–100 (LGID…TTLA), 134–154 (LLLF…LLSM), 167–187 (FILY…GMGL), 208–228 (GLEI…PPII), 242–262 (HYST…YGLV), 272–292 (AHSL…IYAA), 330–350 (GAIL…FLAG), 386–406 (LASP…GIIT), 416–436 (ILIT…LLSM), and 462–482 (IFIL…PDFV).

This sequence belongs to the complex I subunit 4 family.

It is found in the plastid. It localises to the chloroplast thylakoid membrane. The enzyme catalyses a plastoquinone + NADH + (n+1) H(+)(in) = a plastoquinol + NAD(+) + n H(+)(out). The catalysed reaction is a plastoquinone + NADPH + (n+1) H(+)(in) = a plastoquinol + NADP(+) + n H(+)(out). The polypeptide is NAD(P)H-quinone oxidoreductase chain 4, chloroplastic (Amborella trichopoda).